A 433-amino-acid chain; its full sequence is MRMIDIIEKKRDGHTLTTEEINFFIGGYVKGDIPDYQASSLAMAIYFQDMNDDERAALTMAMVNSGDMIDLSDIKGVKVDKHSTGGVGDTTTLVLAPLVAAVDVPVAKMSGRGLGHTGGTIDKLEAIDGFHVEIDEATFVKLVNENKVAVVGQSGNLTPADKKLYALRDVTGTVNSIPLIASSIMSKKIAAGADAIVLDVKTGSGAFMKTLEDAEALAHAMVRIGNNVGRNTMAIISDMNQPLGRAIGNALELQEAIDTLKGQGPKDLTELVLTLGSQMVVLANKAETLEEARALLIEAINSGAALEKFKTFIKNQGGDETVIDHPERLPQAQYQIEYKAKKSGYVTELVSNDIGVASMMLGAGRLTKEDDIDLAVGIVLNKKIGDKVEEGESLLTIHSNRQDVDDVVKKLDSSITIADHVVSPTLIHKIITE.

Position 81 to 83 (81 to 83 (KHS)) interacts with phosphate. 2 residues coordinate K(+): glycine 88 and threonine 90. Residues threonine 92, 108–110 (KMS), and threonine 120 each bind phosphate. Residues arginine 168 and lysine 187 each coordinate substrate. K(+)-binding residues include leucine 243, alanine 246, and glutamate 255.

It belongs to the thymidine/pyrimidine-nucleoside phosphorylase family. As to quaternary structure, homodimer. K(+) is required as a cofactor.

It catalyses the reaction uridine + phosphate = alpha-D-ribose 1-phosphate + uracil. It carries out the reaction thymidine + phosphate = 2-deoxy-alpha-D-ribose 1-phosphate + thymine. The enzyme catalyses 2'-deoxyuridine + phosphate = 2-deoxy-alpha-D-ribose 1-phosphate + uracil. Catalyzes phosphorolysis of the pyrimidine nucleosides uridine, thymidine and 2'-deoxyuridine with the formation of the corresponding pyrimidine base and ribose-1-phosphate. In Staphylococcus aureus (strain NCTC 8325 / PS 47), this protein is Pyrimidine-nucleoside phosphorylase (pdp).